The primary structure comprises 147 residues: Transthyretin (147 aa).

The N-terminal stretch at 1–20 (MASHRLLLLCLAGLVFVSEA) is a signal peptide. Residue C30 is modified to Sulfocysteine. K35 is a binding site for L-thyroxine. Position 62 is a 4-carboxyglutamate (E62). The residue at position 72 (S72) is a Phosphoserine. Position 74 (E74) interacts with L-thyroxine. N118 carries an N-linked (GlcNAc...) asparagine glycan. L-thyroxine is bound at residue S137.

Belongs to the transthyretin family. In terms of assembly, homotetramer. Dimer of dimers. In the homotetramer, subunits assemble around a central channel that can accommodate two ligand molecules. Interacts with RBP4. Post-translationally, sulfonation of the reactive cysteine Cys-30 enhances the stability of the native conformation of TTR, avoiding misassembly of the protein leading to amyloid formation. As to expression, detected in brain.

It localises to the secreted. Its function is as follows. Thyroid hormone-binding protein. Probably transports thyroxine from the bloodstream to the brain. The chain is Transthyretin (TTR) from Pan troglodytes (Chimpanzee).